We begin with the raw amino-acid sequence, 726 residues long: Catalase-peroxidase (726 aa).

Positions 1–33 (MSTTDDTHNTLSTGKCPFHQGGHDRSAGAGTAS) are disordered. A cross-link (tryptophyl-tyrosyl-methioninium (Trp-Tyr) (with M-252)) is located at residues 105–226 (WHGAGTYRSI…LGATEMGLIY (122 aa)). The active-site Proton acceptor is the histidine 106. The segment at residues 226–252 (YVNPEGPDHSGEPLSAAAAIRATFGNM) is a cross-link (tryptophyl-tyrosyl-methioninium (Tyr-Met) (with W-105)). Heme b is bound at residue histidine 267.

The protein belongs to the peroxidase family. Peroxidase/catalase subfamily. Homodimer or homotetramer. Requires heme b as cofactor. Post-translationally, formation of the three residue Trp-Tyr-Met cross-link is important for the catalase, but not the peroxidase activity of the enzyme.

It catalyses the reaction H2O2 + AH2 = A + 2 H2O. The catalysed reaction is 2 H2O2 = O2 + 2 H2O. Its function is as follows. Bifunctional enzyme with both catalase and broad-spectrum peroxidase activity. This chain is Catalase-peroxidase, found in Salmonella heidelberg (strain SL476).